The primary structure comprises 207 residues: Thiamine-phosphate synthase (207 aa).

4-amino-2-methyl-5-(diphosphooxymethyl)pyrimidine-binding positions include 35-39 (QYRDK) and asparagine 67. The Mg(2+) site is built by aspartate 68 and aspartate 86. Threonine 105 lines the 4-amino-2-methyl-5-(diphosphooxymethyl)pyrimidine pocket. Residue 132–134 (SVT) participates in 2-[(2R,5Z)-2-carboxy-4-methylthiazol-5(2H)-ylidene]ethyl phosphate binding. Lysine 135 lines the 4-amino-2-methyl-5-(diphosphooxymethyl)pyrimidine pocket. Glycine 162 contributes to the 2-[(2R,5Z)-2-carboxy-4-methylthiazol-5(2H)-ylidene]ethyl phosphate binding site.

Belongs to the thiamine-phosphate synthase family. The cofactor is Mg(2+).

It catalyses the reaction 2-[(2R,5Z)-2-carboxy-4-methylthiazol-5(2H)-ylidene]ethyl phosphate + 4-amino-2-methyl-5-(diphosphooxymethyl)pyrimidine + 2 H(+) = thiamine phosphate + CO2 + diphosphate. It carries out the reaction 2-(2-carboxy-4-methylthiazol-5-yl)ethyl phosphate + 4-amino-2-methyl-5-(diphosphooxymethyl)pyrimidine + 2 H(+) = thiamine phosphate + CO2 + diphosphate. The enzyme catalyses 4-methyl-5-(2-phosphooxyethyl)-thiazole + 4-amino-2-methyl-5-(diphosphooxymethyl)pyrimidine + H(+) = thiamine phosphate + diphosphate. It functions in the pathway cofactor biosynthesis; thiamine diphosphate biosynthesis; thiamine phosphate from 4-amino-2-methyl-5-diphosphomethylpyrimidine and 4-methyl-5-(2-phosphoethyl)-thiazole: step 1/1. Functionally, condenses 4-methyl-5-(beta-hydroxyethyl)thiazole monophosphate (THZ-P) and 2-methyl-4-amino-5-hydroxymethyl pyrimidine pyrophosphate (HMP-PP) to form thiamine monophosphate (TMP). The protein is Thiamine-phosphate synthase of Pseudomonas putida (strain GB-1).